A 400-amino-acid polypeptide reads, in one-letter code: Mu-type opioid receptor (400 aa).

At 1–68 (MDSSAVPANA…CPPTGSPSMI (68 aa)) the chain is on the extracellular side. N-linked (GlcNAc...) asparagine glycans are attached at residues asparagine 9, asparagine 12, asparagine 33, asparagine 40, and asparagine 48. Residues 69-93 (TAITIMALYSIVCVVGLFGNFLVMY) traverse the membrane as a helical segment. The Cytoplasmic portion of the chain corresponds to 94–106 (VIVRYTKMKTATN). Residues 107 to 131 (IYIFNLALADALATSTLPFQSVNYL) traverse the membrane as a helical segment. The Extracellular segment spans residues 132–142 (MGTWPFGTILC). A disulfide bond links cysteine 142 and cysteine 219. Residues 143–165 (KIVISIDYYNMFTSIFTLCTMSV) form a helical membrane-spanning segment. The Cytoplasmic portion of the chain corresponds to 166–185 (DRYIAVCHPVKALDFRTPRN). A Phosphotyrosine modification is found at tyrosine 168. A helical transmembrane segment spans residues 186-207 (AKIVNVCNWIISSAIGLPVMFM). The Extracellular segment spans residues 208-230 (ATTKYRQGSIDCTLTFSHPTWYW). Residues 231-255 (ENLLKICVFIFAFIMPVLIITVCYG) form a helical membrane-spanning segment. Residues 256–279 (LMILRLKSVRMLSGSKEKDRNLRR) lie on the Cytoplasmic side of the membrane. A helical membrane pass occupies residues 280 to 306 (ITRMVLVVVAVFIVCWTPIHIYVIIKA). The Extracellular portion of the chain corresponds to 307 to 314 (LVTIPETT). Residues 315–338 (FQTVSWHFCIALGYTNSCLNPVLY) form a helical membrane-spanning segment. The NPxxY; plays a role in stabilizing the activated conformation of the receptor signature appears at 334 to 338 (NPVLY). The Cytoplasmic portion of the chain corresponds to 339–400 (AFLDENFKRC…NLEAETAPLP (62 aa)). The S-palmitoyl cysteine moiety is linked to residue cysteine 353. Serine 365 bears the Phosphoserine mark. The residue at position 372 (threonine 372) is a Phosphothreonine. Serine 377 carries the phosphoserine modification. The residue at position 396 (threonine 396) is a Phosphothreonine.

Belongs to the G-protein coupled receptor 1 family. Forms homooligomers and heterooligomers with other GPCRs, such as OPRD1, OPRK1, OPRL1, NPFFR2, ADRA2A, SSTR2, CNR1 and CCR5 (probably in dimeric forms). Interacts with heterotrimeric G proteins; interaction with a heterotrimeric complex containing GNAI1, GNB1 and GNG2 stabilizes the active conformation of the receptor and increases its affinity for endomorphin-2, the synthetic opioid peptide DAMGO and for morphinan agonists. Interacts with PPL; the interaction disrupts agonist-mediated G-protein activation. Interacts (via C-terminus) with DNAJB4 (via C-terminus). Interacts with calmodulin; the interaction inhibits the constitutive activity of OPRM1; it abolishes basal and attenuates agonist-stimulated G-protein coupling. Interacts with FLNA, PLD2, RANBP9 and WLS and GPM6A. Interacts with RTP4. Interacts with SYP and GNAS. Interacts with RGS9, RGS17, RGS20, RGS4, PPP1R9B and HINT1. Post-translationally, phosphorylated. Differentially phosphorylated in basal and agonist-induced conditions. Agonist-mediated phosphorylation modulates receptor internalization. Phosphorylated by GRK2 in a agonist-dependent manner. Phosphorylation at Tyr-168 requires receptor activation, is dependent on non-receptor protein tyrosine kinase Src and results in a decrease in agonist efficacy by reducing G-protein coupling efficiency. Phosphorylated on tyrosine residues; the phosphorylation is involved in agonist-induced G-protein-independent receptor down-regulation. Phosphorylation at Ser-377 is involved in G-protein-dependent but not beta-arrestin-dependent activation of the ERK pathway. Ubiquitinated. A basal ubiquitination seems not to be related to degradation. Ubiquitination is increased upon formation of OPRM1:OPRD1 oligomers leading to proteasomal degradation; the ubiquitination is diminished by RTP4.

The protein resides in the cell membrane. Its subcellular location is the cell projection. It localises to the axon. The protein localises to the perikaryon. It is found in the dendrite. The protein resides in the endosome. Functionally, receptor for endogenous opioids such as beta-endorphin and endomorphin. Receptor for natural and synthetic opioids including morphine, heroin, DAMGO, fentanyl, etorphine, buprenorphin and methadone. Also activated by enkephalin peptides, such as Met-enkephalin or Met-enkephalin-Arg-Phe, with higher affinity for Met-enkephalin-Arg-Phe. Agonist binding to the receptor induces coupling to an inactive GDP-bound heterotrimeric G-protein complex and subsequent exchange of GDP for GTP in the G-protein alpha subunit leading to dissociation of the G-protein complex with the free GTP-bound G-protein alpha and the G-protein beta-gamma dimer activating downstream cellular effectors. The agonist- and cell type-specific activity is predominantly coupled to pertussis toxin-sensitive G(i) and G(o) G alpha proteins, GNAI1, GNAI2, GNAI3 and GNAO1, and to a lesser extent to pertussis toxin-insensitive G alpha proteins GNAZ and GNA15. They mediate an array of downstream cellular responses, including inhibition of adenylate cyclase activity and both N-type and L-type calcium channels, activation of inward rectifying potassium channels, mitogen-activated protein kinase (MAPK), phospholipase C (PLC), phosphoinositide/protein kinase (PKC), phosphoinositide 3-kinase (PI3K) and regulation of NF-kappa-B. Also couples to adenylate cyclase stimulatory G alpha proteins. The selective temporal coupling to G-proteins and subsequent signaling can be regulated by RGSZ proteins, such as RGS9, RGS17 and RGS4. Phosphorylation by members of the GPRK subfamily of Ser/Thr protein kinases and association with beta-arrestins is involved in short-term receptor desensitization. Beta-arrestins associate with the GPRK-phosphorylated receptor and uncouple it from the G-protein thus terminating signal transduction. The phosphorylated receptor is internalized through endocytosis via clathrin-coated pits which involves beta-arrestins. The activation of the ERK pathway occurs either in a G-protein-dependent or a beta-arrestin-dependent manner and is regulated by agonist-specific receptor phosphorylation. Acts as a class A G-protein coupled receptor (GPCR) which dissociates from beta-arrestin at or near the plasma membrane and undergoes rapid recycling. Receptor down-regulation pathways are varying with the agonist and occur dependent or independent of G-protein coupling. Endogenous ligands induce rapid desensitization, endocytosis and recycling. Heterooligomerization with other GPCRs can modulate agonist binding, signaling and trafficking properties. Involved in neurogenesis. This is Mu-type opioid receptor (OPRM1) from Saimiri boliviensis boliviensis (Bolivian squirrel monkey).